The sequence spans 644 residues: 1-deoxy-D-xylulose-5-phosphate synthase (644 aa).

Thiamine diphosphate is bound by residues His-72 and Gly-113 to Ala-115. Mg(2+) is bound at residue Asp-144. Thiamine diphosphate contacts are provided by residues Gly-145 to Ala-146, Asn-174, Tyr-287, and Glu-370. Asn-174 is a binding site for Mg(2+).

It belongs to the transketolase family. DXPS subfamily. In terms of assembly, homodimer. It depends on Mg(2+) as a cofactor. Thiamine diphosphate is required as a cofactor.

The catalysed reaction is D-glyceraldehyde 3-phosphate + pyruvate + H(+) = 1-deoxy-D-xylulose 5-phosphate + CO2. Its pathway is metabolic intermediate biosynthesis; 1-deoxy-D-xylulose 5-phosphate biosynthesis; 1-deoxy-D-xylulose 5-phosphate from D-glyceraldehyde 3-phosphate and pyruvate: step 1/1. Catalyzes the acyloin condensation reaction between C atoms 2 and 3 of pyruvate and glyceraldehyde 3-phosphate to yield 1-deoxy-D-xylulose-5-phosphate (DXP). The protein is 1-deoxy-D-xylulose-5-phosphate synthase of Prochlorococcus marinus (strain MIT 9303).